The primary structure comprises 732 residues: B-cadherin (732 aa).

Residues 1 to 6 (LRRQKR) constitute a propeptide that is removed on maturation. Cadherin domains are found at residues 6-114 (RDWV…KPQF), 115-227 (TQEV…APEF), 228-339 (DPKT…APVF), 340-443 (DPPL…VNDH), and 444-554 (GPEP…RVDT). Over 6–554 (RDWVIPPIKV…SCAQKPRVDT (549 aa)) the chain is Extracellular. N-linked (GlcNAc...) asparagine glycosylation is present at asparagine 137. The N-linked (GlcNAc...) asparagine glycan is linked to asparagine 410. Residues 555–580 (GVPIVLAVLGAVLALLLVLLLLLLLV) form a helical membrane-spanning segment. The Cytoplasmic portion of the chain corresponds to 581–732 (RRRKVVKEPL…ELYGGGEDEE (152 aa)).

In terms of tissue distribution, expressed in a wide variety of tissues.

Its subcellular location is the cell membrane. In terms of biological role, cadherins are calcium-dependent cell adhesion proteins. They preferentially interact with themselves in a homophilic manner in connecting cells; cadherins may thus contribute to the sorting of heterogeneous cell types. B-cadherin may have important functions in neurogenesis, in at least some epithelia, and in embryogenesis. This chain is B-cadherin (K-CAM), found in Gallus gallus (Chicken).